The following is a 490-amino-acid chain: Cytochrome P450 2C7 (490 aa).

R144 carries the post-translational modification Dimethylated arginine. C435 contacts heme.

Belongs to the cytochrome P450 family. Requires heme as cofactor.

Its subcellular location is the endoplasmic reticulum membrane. It is found in the microsome membrane. It catalyses the reaction an organic molecule + reduced [NADPH--hemoprotein reductase] + O2 = an alcohol + oxidized [NADPH--hemoprotein reductase] + H2O + H(+). Cytochromes P450 are a group of heme-thiolate monooxygenases. In liver microsomes, this enzyme is involved in an NADPH-dependent electron transport pathway. It oxidizes a variety of structurally unrelated compounds, including steroids, fatty acids, and xenobiotics. In Rattus norvegicus (Rat), this protein is Cytochrome P450 2C7 (Cyp2c7).